The sequence spans 527 residues: Calcium and calcium/calmodulin-dependent serine/threonine-protein kinase (527 aa).

The 303-residue stretch at 12–314 (YEVSEILGRG…AQELLSDPWV (303 aa)) folds into the Protein kinase domain. 18-26 (LGRGGFSVV) serves as a coordination point for ATP. Residues 25-51 (VVRKGTRKSNNDDEKSQSQSKSQSQSQ) form a disordered region. A compositionally biased stretch (low complexity) spans 41-51 (QSQSKSQSQSQ). Residue K55 coordinates ATP. Residues 59-78 (RLGTSNNLPRKKDGGENSTE) are disordered. The active-site Proton acceptor is the D179. A helical transmembrane segment spans residues 239 to 255 (MWSLGVILYILLSGYPP). Phosphothreonine is present on T279. Residues 337 to 350 (ARRKLRAAAIASVW) are calmodulin-binding. The stretch at 358-379 (TKKLKSLVGSYDLKEDEIENLR) forms a coiled coil. 3 EF-hand domains span residues 408–443 (SLIPFAARIFDLFDNNRDGTVDMREILCGFSSLKNS), 444–479 (KGEDALRLCFQMYDTDRSGCITKEEVASMLRALPYD), and 486–521 (TEPGKLDEIFDLMDANSDGKVTFDEFKAAMQRDSSL). Positions 421, 423, 425, 427, 432, 457, 459, 461, 463, 468, 499, 501, 503, 505, and 510 each coordinate Ca(2+).

This sequence belongs to the protein kinase superfamily. CAMK Ser/Thr protein kinase family. CaMK subfamily. Post-translationally, autophosphorylation.

The protein localises to the membrane. It catalyses the reaction L-seryl-[protein] + ATP = O-phospho-L-seryl-[protein] + ADP + H(+). The enzyme catalyses L-threonyl-[protein] + ATP = O-phospho-L-threonyl-[protein] + ADP + H(+). Activated by calcium. Autophosphorylation may play an important role in the regulation of the kinase activity. Functionally, protein kinase that recognizes the calcium spiking induced by Nod factors and translates this signal to components controlling nodulation and mycorrhizal infection responses. The polypeptide is Calcium and calcium/calmodulin-dependent serine/threonine-protein kinase (SYM9) (Pisum sativum (Garden pea)).